Reading from the N-terminus, the 101-residue chain is Guanyl-specific ribonuclease Po1 (101 aa).

Pyrrolidone carboxylic acid is present on Gln-1. Intrachain disulfides connect Cys-7–Cys-84, Cys-9–Cys-99, and Cys-48–Cys-82. His-36 is a catalytic residue. Catalysis depends on Glu-54, which acts as the Proton acceptor. Catalysis depends on His-87, which acts as the Proton donor.

This sequence belongs to the ribonuclease N1/T1 family.

The enzyme catalyses [RNA] containing guanosine + H2O = an [RNA fragment]-3'-guanosine-3'-phosphate + a 5'-hydroxy-ribonucleotide-3'-[RNA fragment].. Inhibited by divalent cations. Inhibition decreases in the order zinc, lead, cadmium, nickel, mercury. In Pleurotus ostreatus (Oyster mushroom), this protein is Guanyl-specific ribonuclease Po1.